The following is an 862-amino-acid chain: uncharacterized protein (862 aa).

Disordered stretches follow at residues 45–91 (HPPV…PDEV), 633–824 (RAEQ…GDDD), and 837–862 (GGSGFLTSTAGRNRKSNKQSKTLLLS). 2 stretches are compositionally biased toward acidic residues: residues 57 to 69 (MDVDAESEDEKDE) and 78 to 91 (PEVESEADEDPDEV). 3 stretches are compositionally biased toward basic and acidic residues: residues 633–650 (RAEQKASKESAKGEDAAK), 657–686 (REAEAGTETPKKKQKEEKSEKPKKTGKAEK), and 694–703 (TKKEKTEKKT). Residues 751–760 (EKKKRTAAKK) are compositionally biased toward basic residues. Over residues 761 to 779 (KTVDRPSGHRPSSKKEYRS) the composition is skewed to basic and acidic residues.

This is an uncharacterized protein from Ictaluridae (bullhead catfishes).